The following is a 182-amino-acid chain: ATP synthase subunit delta (182 aa).

Belongs to the ATPase delta chain family. As to quaternary structure, F-type ATPases have 2 components, F(1) - the catalytic core - and F(0) - the membrane proton channel. F(1) has five subunits: alpha(3), beta(3), gamma(1), delta(1), epsilon(1). CF(0) has four main subunits: a(1), b(1), b'(1) and c(10-14). The alpha and beta chains form an alternating ring which encloses part of the gamma chain. F(1) is attached to F(0) by a central stalk formed by the gamma and epsilon chains, while a peripheral stalk is formed by the delta, b and b' chains.

It is found in the cellular thylakoid membrane. F(1)F(0) ATP synthase produces ATP from ADP in the presence of a proton or sodium gradient. F-type ATPases consist of two structural domains, F(1) containing the extramembraneous catalytic core and F(0) containing the membrane proton channel, linked together by a central stalk and a peripheral stalk. During catalysis, ATP synthesis in the catalytic domain of F(1) is coupled via a rotary mechanism of the central stalk subunits to proton translocation. Functionally, this protein is part of the stalk that links CF(0) to CF(1). It either transmits conformational changes from CF(0) to CF(1) or is implicated in proton conduction. The sequence is that of ATP synthase subunit delta from Parasynechococcus marenigrum (strain WH8102).